We begin with the raw amino-acid sequence, 362 residues long: tRNA-specific 2-thiouridylase MnmA (362 aa).

ATP is bound by residues 6-13 and L32; that span reads AMSGGVDS. C101 acts as the Nucleophile in catalysis. A disulfide bridge links C101 with C197. ATP is bound at residue G125. The interaction with tRNA stretch occupies residues 147–149; sequence KDQ. C197 (cysteine persulfide intermediate) is an active-site residue.

Belongs to the MnmA/TRMU family.

It localises to the cytoplasm. The catalysed reaction is S-sulfanyl-L-cysteinyl-[protein] + uridine(34) in tRNA + AH2 + ATP = 2-thiouridine(34) in tRNA + L-cysteinyl-[protein] + A + AMP + diphosphate + H(+). Its function is as follows. Catalyzes the 2-thiolation of uridine at the wobble position (U34) of tRNA, leading to the formation of s(2)U34. This is tRNA-specific 2-thiouridylase MnmA from Acidothermus cellulolyticus (strain ATCC 43068 / DSM 8971 / 11B).